A 1061-amino-acid chain; its full sequence is Atrial natriuretic peptide receptor 1 (1061 aa).

Positions 1–32 (MPGPRRPAGSRLRLLLLLLLPPLLLLLRGSHA) are cleaved as a signal peptide. Topologically, residues 33 to 473 (GNLTVAVVLP…CNQDHLSTLE (441 aa)) are extracellular. N34 and N45 each carry an N-linked (GlcNAc...) asparagine glycan. Residues S85, G117, and C118 each coordinate chloride. Cystine bridges form between C92–C118 and C196–C245. N-linked (GlcNAc...) asparagine glycans are attached at residues N212, N338, N379, N386, and N427. Cysteines 455 and 464 form a disulfide. Residues 474–494 (VLALVGSLSLLGILIVSFFIY) form a helical membrane-spanning segment. The Cytoplasmic portion of the chain corresponds to 495–1061 (RKMQLEKELA…LGERGSSTRG (567 aa)). Phosphoserine is present on residues S519 and S529. One can recognise a Protein kinase domain in the interval 528–805 (GSRLTLSGRG…QIRLTLRKFN (278 aa)). T532 carries the post-translational modification Phosphothreonine. Phosphoserine is present on residues S534, S538, and S542. T545 carries the phosphothreonine modification. The 131-residue stretch at 876–1006 (TIYFSDIVGF…DTVNTASRME (131 aa)) folds into the Guanylate cyclase domain.

It belongs to the adenylyl cyclase class-4/guanylyl cyclase family. As to quaternary structure, homodimer. Post-translationally, phosphorylation of the protein kinase-like domain is required for full activation by ANP.

It localises to the membrane. It carries out the reaction GTP = 3',5'-cyclic GMP + diphosphate. Functionally, receptor for the atrial natriuretic peptide NPPA/ANP and the brain natriuretic peptide NPPB/BNP which are potent vasoactive hormones playing a key role in cardiovascular homeostasis. Plays an essential role in the regulation of endothelial cell senescence and vascular aging. Upon activation by ANP or BNP, stimulates the production of cyclic guanosine monophosphate (cGMP) that promotes vascular tone and volume homeostasis by activation of protein kinase cGMP-dependent 1/PRKG1 and subsequently PRKAA1, thereby controlling blood pressure and maintaining cardiovascular homeostasis. This Homo sapiens (Human) protein is Atrial natriuretic peptide receptor 1.